Reading from the N-terminus, the 269-residue chain is Tryptophan synthase alpha chain (269 aa).

Active-site proton acceptor residues include Glu49 and Asp60.

This sequence belongs to the TrpA family. As to quaternary structure, tetramer of two alpha and two beta chains.

It catalyses the reaction (1S,2R)-1-C-(indol-3-yl)glycerol 3-phosphate + L-serine = D-glyceraldehyde 3-phosphate + L-tryptophan + H2O. It participates in amino-acid biosynthesis; L-tryptophan biosynthesis; L-tryptophan from chorismate: step 5/5. Functionally, the alpha subunit is responsible for the aldol cleavage of indoleglycerol phosphate to indole and glyceraldehyde 3-phosphate. This is Tryptophan synthase alpha chain from Histophilus somni (strain 2336) (Haemophilus somnus).